Reading from the N-terminus, the 289-residue chain is Phospholipase A1 (289 aa).

The first 20 residues, 1 to 20, serve as a signal peptide directing secretion; that stretch reads MRTLQGWLLPVFMLPMAVYA. The Periplasmic portion of the chain corresponds to 21–52; sequence QEATVKEVHDAPAVRGSIIANMLQEHDNPFTL. The chain crosses the membrane as a beta stranded span at residues 53-65; sequence YPYDTNYLIYTQT. Topologically, residues 66–84 are extracellular; sequence SDLNKEAIASYDWAENARK. Residues 85–99 traverse the membrane as a beta stranded segment; the sequence is DEVKFQLSLAFPLWR. Over 100-105 the chain is Periplasmic; it reads GILGPN. The beta stranded transmembrane segment at 106-118 threads the bilayer; the sequence is SVLGASYTQKSWW. Residues 119 to 128 lie on the Extracellular side of the membrane; it reads QLSNSEESSP. Ser126 serves as a coordination point for Ca(2+). A beta stranded transmembrane segment spans residues 129 to 148; that stretch reads FRETNYEPQLFLGFATDYRF. Topologically, residues 149-150 are periplasmic; the sequence is AG. A beta stranded membrane pass occupies residues 151–164; sequence WTLRDVEMGYNHDS. His162 (proton acceptor) is an active-site residue. Ser164 acts as the Nucleophile in catalysis. Residues 165–173 are Extracellular-facing; sequence NGRSDPTSR. Ca(2+) contacts are provided by Arg167 and Ser172. Residues 174–186 traverse the membrane as a beta stranded segment; the sequence is SWNRLYTRLMAEN. Topologically, residues 187-188 are periplasmic; it reads GN. The chain crosses the membrane as a beta stranded span at residues 189-198; it reads WLVEVKPWYV. The Extracellular portion of the chain corresponds to 199–216; sequence VGNTDDNPDITKYMGYYQ. Asp204 contributes to the Ca(2+) binding site. Residues 217 to 223 form a beta stranded membrane-spanning segment; it reads LKIGYHL. Residues 224–225 are Periplasmic-facing; it reads GD. The beta stranded transmembrane segment at 226-234 threads the bilayer; the sequence is AVLSAKGQY. Residues 235–241 lie on the Extracellular side of the membrane; the sequence is NWNTGYG. A beta stranded membrane pass occupies residues 242 to 250; the sequence is GAELGLSYP. Residues 251–255 are Periplasmic-facing; that stretch reads ITKHV. A beta stranded transmembrane segment spans residues 256–265; sequence RLYTQVYSGY. Over 266 to 274 the chain is Extracellular; it reads GESLIDYNF. The chain crosses the membrane as a beta stranded span at residues 275-286; the sequence is NQTRVGVGVMLN. The Periplasmic portion of the chain corresponds to 287–289; it reads DLF.

This sequence belongs to the phospholipase A1 family. As to quaternary structure, homodimer; dimerization is reversible, and the dimeric form is the active one. Ca(2+) is required as a cofactor.

It is found in the cell outer membrane. The catalysed reaction is a 1,2-diacyl-sn-glycero-3-phosphocholine + H2O = a 2-acyl-sn-glycero-3-phosphocholine + a fatty acid + H(+). The enzyme catalyses a 1,2-diacyl-sn-glycero-3-phosphocholine + H2O = a 1-acyl-sn-glycero-3-phosphocholine + a fatty acid + H(+). Hydrolysis of phosphatidylcholine with phospholipase A2 (EC 3.1.1.4) and phospholipase A1 (EC 3.1.1.32) activities. This is Phospholipase A1 (pldA) from Escherichia coli O157:H7.